The following is a 701-amino-acid chain: Meprin A subunit beta (701 aa).

The signal sequence occupies residues 1 to 22 (MDLWNLSWFLFLDALLVISGLA). Positions 23–61 (TPENFDVDGGMDQDIFDINEGLGLDLFEGDIRLDRAQIR) are excised as a propeptide. Topologically, residues 23 to 652 (TPENFDVDGG…CEKRGSTRDT (630 aa)) are extracellular. One can recognise a Peptidase M12A domain in the interval 62–256 (NSIIGEKYRW…LKLNQLYNCS (195 aa)). 3 disulfides stabilise this stretch: Cys-103-Cys-255, Cys-124-Cys-144, and Cys-265-Cys-427. A Zn(2+)-binding site is contributed by His-152. Residue Glu-153 is part of the active site. Zn(2+)-binding residues include His-156 and His-162. N-linked (GlcNAc...) asparagine glycans are attached at residues Asn-218, Asn-254, Asn-370, Asn-421, Asn-436, Asn-445, Asn-547, and Asn-592. The MAM domain occupies 260–429 (SFMDSCSFEL…INLSETRCPH (170 aa)). Residues 430–585 (HIWHIRNFTQ…GDDVYILLTV (156 aa)) enclose the MATH domain. Residue Ser-593 is glycosylated (O-linked (GalNAc...) serine). Thr-594 and Thr-599 each carry an O-linked (GalNAc...) threonine glycan. Residues 595–607 (QIQLTPAPSVQDL) are required for proteolytic processing. A glycan (O-linked (GalNAc...) serine) is linked at Ser-603. In terms of domain architecture, EGF-like spans 604–644 (VQDLCSKTTCKNDGVCTVRDGKAECRCQSGEDWWYMGERCE). Intrachain disulfides connect Cys-608–Cys-619, Cys-613–Cys-628, and Cys-630–Cys-643. Residues 653–673 (IVIAVSSTVAVFALMLIITLV) traverse the membrane as a helical segment. Residues 674 to 701 (SVYCTRKKYRERMSSNRPNLTPQNQHAF) lie on the Cytoplasmic side of the membrane. Thr-694 is modified (phosphothreonine).

Homotetramer consisting of disulfide-linked beta subunits, or heterotetramer of two alpha and two beta subunits formed by non-covalent association of two disulfide-linked heterodimers. Interacts with MBL2 through its carbohydrate moiety. This interaction may inhibit its catalytic activity. Interacts with TSPAN8. It depends on Zn(2+) as a cofactor. Phosphorylated by PKC at multiple sites of its cytoplasmic part. Phosphorylation dcreases activity at the cell surface, leading to diminished substrate cleavage. In terms of processing, N-glycosylated; contains high mannose and/or complex biantennary structures. Post-translationally, O-glycosylation protect the C-terminal region from proteolytic cleavage and diminish secretion, this seems to be specific to human. Proteolytically activated by trypsin in the intestinal lumen and kallikrein-related peptidases in other tissues. In terms of tissue distribution, the major site of expression is the brush border membrane of small intestinal and kidney epithelial cells.

The protein localises to the cell membrane. Its subcellular location is the secreted. The catalysed reaction is Hydrolysis of proteins, including azocasein, and peptides. Hydrolysis of 5-His-|-Leu-6, 6-Leu-|-Cys-7, 14-Ala-|-Leu-15 and 19-Cys-|-Gly-20 bonds in insulin B chain.. Its activity is regulated as follows. Strongly inhibited by fetuin-A/AHSG. Its function is as follows. Membrane metallopeptidase that sheds many membrane-bound proteins. Exhibits a strong preference for acidic amino acids at the P1' position. Known substrates include: FGF19, VGFA, IL1B, IL18, procollagen I and III, E-cadherin, KLK7, gastrin, ADAM10, tenascin-C. The presence of several pro-inflammatory cytokine among substrates implicate MEP1B in inflammation. It is also involved in tissue remodeling due to its capability to degrade extracellular matrix components. Also cleaves the amyloid precursor protein/APP, thereby releasing neurotoxic amyloid beta peptides. The polypeptide is Meprin A subunit beta (MEP1B) (Homo sapiens (Human)).